Reading from the N-terminus, the 466-residue chain is UDP-N-acetylmuramoylalanine--D-glutamate ligase (466 aa).

121 to 127 (GTNGKST) lines the ATP pocket.

It belongs to the MurCDEF family.

The protein resides in the cytoplasm. It carries out the reaction UDP-N-acetyl-alpha-D-muramoyl-L-alanine + D-glutamate + ATP = UDP-N-acetyl-alpha-D-muramoyl-L-alanyl-D-glutamate + ADP + phosphate + H(+). It participates in cell wall biogenesis; peptidoglycan biosynthesis. Cell wall formation. Catalyzes the addition of glutamate to the nucleotide precursor UDP-N-acetylmuramoyl-L-alanine (UMA). The protein is UDP-N-acetylmuramoylalanine--D-glutamate ligase of Mesorhizobium japonicum (strain LMG 29417 / CECT 9101 / MAFF 303099) (Mesorhizobium loti (strain MAFF 303099)).